The sequence spans 372 residues: Ligninase B (372 aa).

A signal peptide spans 1 to 21 (MAFKQLFAAISLALSLSAANA). Positions 22–28 (AAVIEKR) are excised as a propeptide. Intrachain disulfides connect C31–C43, C42–C313, C62–C148, and C277–C345. H75 functions as the Proton acceptor in the catalytic mechanism. Positions 76, 94, 96, and 98 each coordinate Ca(2+). A heme b-binding site is contributed by H204. 5 residues coordinate Ca(2+): S205, D222, T224, I227, and D229. N-linked (GlcNAc...) asparagine glycosylation occurs at N285. A compositionally biased stretch (low complexity) spans 350 to 361 (FPTLTTLPGPET). The disordered stretch occupies residues 350–372 (FPTLTTLPGPETSVQRIPPPPGA).

Belongs to the peroxidase family. Ligninase subfamily. Heme b is required as a cofactor. The cofactor is Ca(2+).

The catalysed reaction is 1-(3,4-dimethoxyphenyl)-2-(2-methoxyphenoxy)propane-1,3-diol + H2O2 = 3,4-dimethoxybenzaldehyde + guaiacol + glycolaldehyde + H2O. The enzyme catalyses 2 (3,4-dimethoxyphenyl)methanol + H2O2 = 2 (3,4-dimethoxyphenyl)methanol radical + 2 H2O. It participates in secondary metabolite metabolism; lignin degradation. Functionally, depolymerization of lignin. Catalyzes the C(alpha)-C(beta) cleavage of the propyl side chains of lignin. This Phanerodontia chrysosporium (White-rot fungus) protein is Ligninase B (LIPB).